We begin with the raw amino-acid sequence, 382 residues long: Mannitol-1-phosphate 5-dehydrogenase (382 aa).

Ala3–Gly14 serves as a coordination point for NAD(+). Lys269 is subject to N6-acetyllysine.

It belongs to the mannitol dehydrogenase family.

It catalyses the reaction D-mannitol 1-phosphate + NAD(+) = beta-D-fructose 6-phosphate + NADH + H(+). This is Mannitol-1-phosphate 5-dehydrogenase from Escherichia coli O7:K1 (strain IAI39 / ExPEC).